The primary structure comprises 136 residues: Protein PsiE (136 aa).

Helical transmembrane passes span 15–35, 55–75, 82–102, and 108–128; these read ILQN…VLFL, YELV…ALIV, FHFP…RLII, and PMDV…LWLC.

It belongs to the PsiE family.

The protein resides in the cell inner membrane. This Salmonella arizonae (strain ATCC BAA-731 / CDC346-86 / RSK2980) protein is Protein PsiE.